Here is a 506-residue protein sequence, read N- to C-terminus: Chromosomal replication initiator protein DnaA (506 aa).

Residues 1–87 (MSVELWQQCV…IGSRRSSAPR (87 aa)) are domain I, interacts with DnaA modulators. Residues 87-169 (RAAPNAPVSA…QVEGALKHTS (83 aa)) form a domain II region. The interval 135–154 (DSFDAMAEPAAAPPSGGGRA) is disordered. The span at 139 to 148 (AMAEPAAAPP) shows a compositional bias: low complexity. The domain III, AAA+ region stretch occupies residues 170-386 (YLNRTFTFDT…GALKRVIAHS (217 aa)). Residues Gly214, Gly216, Lys217, and Thr218 each contribute to the ATP site. A domain IV, binds dsDNA region spans residues 387 to 506 (HFMGRDITIE…YKNLLRTLTT (120 aa)).

It belongs to the DnaA family. As to quaternary structure, oligomerizes as a right-handed, spiral filament on DNA at oriC.

It is found in the cytoplasm. Its function is as follows. Plays an essential role in the initiation and regulation of chromosomal replication. ATP-DnaA binds to the origin of replication (oriC) to initiate formation of the DNA replication initiation complex once per cell cycle. Binds the DnaA box (a 9 base pair repeat at the origin) and separates the double-stranded (ds)DNA. Forms a right-handed helical filament on oriC DNA; dsDNA binds to the exterior of the filament while single-stranded (ss)DNA is stabiized in the filament's interior. The ATP-DnaA-oriC complex binds and stabilizes one strand of the AT-rich DNA unwinding element (DUE), permitting loading of DNA polymerase. After initiation quickly degrades to an ADP-DnaA complex that is not apt for DNA replication. Binds acidic phospholipids. In terms of biological role, non-cooperatively binds DnaA boxes in the minimal plasmid RK2 replication origin (oriV). In vitro in the presence of plasmid RK2-derived TrfA and E.coli protein HU, forms an open complex at oriV. This complex was not however competent for formation of a pre-priming complex with E.coli DnaB and DnaC. Broad host range plasmid RK2 requires not only DnaA for replication but also TrfA and host factors. This Pseudomonas putida (strain ATCC 47054 / DSM 6125 / CFBP 8728 / NCIMB 11950 / KT2440) protein is Chromosomal replication initiator protein DnaA.